Here is a 161-residue protein sequence, read N- to C-terminus: Small heat shock protein hspJ (161 aa).

One can recognise a sHSP domain in the interval 52-161 (SKFTSLNPKL…FEKEIKINIE (110 aa)).

It belongs to the small heat shock protein (HSP20) family.

This Dictyostelium discoideum (Social amoeba) protein is Small heat shock protein hspJ (hspJ).